Consider the following 627-residue polypeptide: 1-deoxy-D-xylulose-5-phosphate synthase (627 aa).

Thiamine diphosphate-binding positions include histidine 80 and 121-123 (GHS). Mg(2+) is bound at residue aspartate 152. Residues 153 to 154 (GA), asparagine 181, tyrosine 288, and glutamate 370 contribute to the thiamine diphosphate site. Asparagine 181 provides a ligand contact to Mg(2+).

This sequence belongs to the transketolase family. DXPS subfamily. In terms of assembly, homodimer. It depends on Mg(2+) as a cofactor. Thiamine diphosphate is required as a cofactor.

The enzyme catalyses D-glyceraldehyde 3-phosphate + pyruvate + H(+) = 1-deoxy-D-xylulose 5-phosphate + CO2. Its pathway is metabolic intermediate biosynthesis; 1-deoxy-D-xylulose 5-phosphate biosynthesis; 1-deoxy-D-xylulose 5-phosphate from D-glyceraldehyde 3-phosphate and pyruvate: step 1/1. Functionally, catalyzes the acyloin condensation reaction between C atoms 2 and 3 of pyruvate and glyceraldehyde 3-phosphate to yield 1-deoxy-D-xylulose-5-phosphate (DXP). The chain is 1-deoxy-D-xylulose-5-phosphate synthase from Vibrio atlanticus (strain LGP32) (Vibrio splendidus (strain Mel32)).